Here is a 187-residue protein sequence, read N- to C-terminus: MVKYSREPSNLTRSAKAYGAYLRVHFKNTYETATAIKGMLVKDAKRYLNDVIDRKRCVPFRKFRGGVGRCAQAKAFKHTQGRWPEKSCKFLLDLLKNLESNAEVKGLEQSKLRLEHVQVNRAPVGRRRSYRAHGRIIPFLSHPCHVELIAVEDEDHVPRHTPTEKKVVKMNKRELARMRLRTGRALS.

Belongs to the universal ribosomal protein uL22 family.

This chain is Large ribosomal subunit protein uL22 (RPL17), found in Theileria annulata.